The sequence spans 356 residues: Alpha-N-acetylneuraminide alpha-2,8-sialyltransferase (356 aa).

Residues 1-29 lie on the Cytoplasmic side of the membrane; that stretch reads MSPCGRARRQTSRGAMAVLAWKFPRTRLP. The chain crosses the membrane as a helical; Signal-anchor for type II membrane protein span at residues 30-48; the sequence is MGASALCVVVLCWLYIFPV. Topologically, residues 49–356 are lumenal; it reads YRLPNEKEIV…CEDTSLQPTS (308 aa). N-linked (GlcNAc...) asparagine glycans are attached at residues asparagine 71 and asparagine 119. Disulfide bonds link cysteine 138-cysteine 287 and cysteine 152-cysteine 347. Positions 143 and 166 each coordinate CMP-N-acetyl-beta-neuraminate. 2 N-linked (GlcNAc...) asparagine glycosylation sites follow: asparagine 214 and asparagine 245. CMP-N-acetyl-beta-neuraminate is bound by residues serine 274, threonine 275, glycine 276, tryptophan 296, and histidine 310. The Proton donor/acceptor role is filled by histidine 322.

Belongs to the glycosyltransferase 29 family.

The protein resides in the golgi apparatus membrane. It carries out the reaction an N-acetyl-alpha-neuraminyl-(2-&gt;3)-beta-D-galactosyl derivative + CMP-N-acetyl-beta-neuraminate = an N-acetyl-alpha-neuraminyl-(2-&gt;8)-N-acetyl-alpha-neuraminyl-(2-&gt;3)-beta-D-galactosyl derivative + CMP + H(+). The catalysed reaction is a ganglioside GM3 (d18:1(4E)) + CMP-N-acetyl-beta-neuraminate = a ganglioside GD3 (d18:1(4E)) + CMP + H(+). The enzyme catalyses a ganglioside GD3 (d18:1(4E)) + CMP-N-acetyl-beta-neuraminate = a ganglioside GT3 (d18:1(4E)) + CMP + H(+). It catalyses the reaction a ganglioside GD1a (d18:1(4E)) + CMP-N-acetyl-beta-neuraminate = a ganglioside GT1a (d18:1(4E)) + CMP + H(+). It carries out the reaction a ganglioside GT1b (d18:1(4E)) + CMP-N-acetyl-beta-neuraminate = a ganglioside GQ1b (d18:1(4E)) + CMP + H(+). The catalysed reaction is a ganglioside GM1b (d18:1(4E)) + CMP-N-acetyl-beta-neuraminate = a ganglioside GD1c (d18:1(4E)) + CMP + H(+). The enzyme catalyses a ganglioside GD3 + CMP-N-acetyl-beta-neuraminate = a ganglioside GT3 + CMP + H(+). It catalyses the reaction [alpha-N-acetylneuraminyl-(2-&gt;8)](n)-alpha-N-acetylneuraminyl-(2-&gt;8)-alpha-N-acetylneuraminyl-(2-&gt;3)-beta-D-galactosyl-(1-&gt;4)-beta-D-glucosyl-(1&lt;-&gt;1)-ceramide + CMP-N-acetyl-beta-neuraminate = [alpha-N-acetylneuraminyl-(2-&gt;8)](n+1)-alpha-N-acetylneuraminyl-(2-&gt;8)-alpha-N-acetylneuraminyl-(2-&gt;3)-beta-D-galactosyl-(1-&gt;4)-beta-D-glucosyl-(1&lt;-&gt;1)-ceramide + CMP + H(+). The protein operates within protein modification; protein glycosylation. Its pathway is lipid metabolism; sphingolipid metabolism. In terms of biological role, catalyzes the addition of sialic acid in alpha 2,8-linkage to the sialic acid moiety of the ganglioside GM3 to form ganglioside GD3; gangliosides are a subfamily of complex glycosphingolipds that contain one or more residues of sialic acid. Can catalyze the addition of a second alpha-2,8- sialic acid to GD3 to form GT3. Can use GM1b, GD1a and GT1b as acceptor substrates to synthesize GD1c, GT1a and GQ1b respectively. The sequence is that of Alpha-N-acetylneuraminide alpha-2,8-sialyltransferase from Pan troglodytes (Chimpanzee).